Consider the following 254-residue polypeptide: 3-deoxy-manno-octulosonate cytidylyltransferase (254 aa).

This sequence belongs to the KdsB family.

Its subcellular location is the cytoplasm. The enzyme catalyses 3-deoxy-alpha-D-manno-oct-2-ulosonate + CTP = CMP-3-deoxy-beta-D-manno-octulosonate + diphosphate. The protein operates within nucleotide-sugar biosynthesis; CMP-3-deoxy-D-manno-octulosonate biosynthesis; CMP-3-deoxy-D-manno-octulosonate from 3-deoxy-D-manno-octulosonate and CTP: step 1/1. It functions in the pathway bacterial outer membrane biogenesis; lipopolysaccharide biosynthesis. In terms of biological role, activates KDO (a required 8-carbon sugar) for incorporation into bacterial lipopolysaccharide in Gram-negative bacteria. In Chlamydia pneumoniae (Chlamydophila pneumoniae), this protein is 3-deoxy-manno-octulosonate cytidylyltransferase.